Here is a 66-residue protein sequence, read N- to C-terminus: DNA-directed RNA polymerase subunit Rpo10 (66 aa).

Zn(2+)-binding residues include Cys-7, Cys-10, Cys-44, and Cys-45.

It belongs to the archaeal Rpo10/eukaryotic RPB10 RNA polymerase subunit family. In terms of assembly, part of the RNA polymerase complex. The cofactor is Zn(2+).

It localises to the cytoplasm. The catalysed reaction is RNA(n) + a ribonucleoside 5'-triphosphate = RNA(n+1) + diphosphate. Functionally, DNA-dependent RNA polymerase (RNAP) catalyzes the transcription of DNA into RNA using the four ribonucleoside triphosphates as substrates. This Staphylothermus marinus (strain ATCC 43588 / DSM 3639 / JCM 9404 / F1) protein is DNA-directed RNA polymerase subunit Rpo10.